Consider the following 244-residue polypeptide: Orotidine 5'-phosphate decarboxylase (244 aa).

Substrate-binding positions include Asp14, Lys36, 63–72 (DLKFHDIPNT), Thr127, Arg188, Gln197, Gly217, and Arg218. Residue Lys65 is the Proton donor of the active site.

This sequence belongs to the OMP decarboxylase family. Type 1 subfamily. Homodimer.

It carries out the reaction orotidine 5'-phosphate + H(+) = UMP + CO2. The protein operates within pyrimidine metabolism; UMP biosynthesis via de novo pathway; UMP from orotate: step 2/2. In terms of biological role, catalyzes the decarboxylation of orotidine 5'-monophosphate (OMP) to uridine 5'-monophosphate (UMP). The sequence is that of Orotidine 5'-phosphate decarboxylase from Syntrophotalea carbinolica (strain DSM 2380 / NBRC 103641 / GraBd1) (Pelobacter carbinolicus).